Here is a 217-residue protein sequence, read N- to C-terminus: MRVLVVEDEQLLADAVATGLRREAMAVDVVYDGAAALERIGVNDYDVVVLDRDLPLVHGDDVCRKIVELGMPTRVLMLTASGDVSDRVEGLEIGADDYLPKPFAFSELIARVRALGRRTSVPLPPVLERAGIKLDPNRREVFRDGKEVQLAPKEFAVLEVLMRSEGAVVSAEQLLEKAWDENTDPFTNVVRVTVMTLRRKLGEPPVIVTVPGSGYRI.

The Response regulatory domain occupies 2 to 116; that stretch reads RVLVVEDEQL…ELIARVRALG (115 aa). D51 carries the 4-aspartylphosphate modification. A DNA-binding region (ompR/PhoB-type) is located at residues 124-217; that stretch reads PPVLERAGIK…VTVPGSGYRI (94 aa).

Its function is as follows. Member of the two-component regulatory system CutS/CutR, involved in the regulation of copper metabolism. CutR suppresses a defective melC1 gene, encoding a putative copper-transfer gene, probably by altering copper metabolism. The polypeptide is Transcriptional regulatory protein CutR (cutR) (Streptomyces lividans).